Reading from the N-terminus, the 283-residue chain is MGEKKNEGDNKKKGGDNKKKNETPSITVVLKVDMHCEGCASRIVKCVRSFQGVETVKSESATGKLTVTGALDPVKLREKLEEKTKKKVDLVSPQPKKEKEKENKNKNDEDKKKSEEKKKPDNNDKKPKETPVTTAVLKLNFHCQGCIGKIQKTVTKTKGVNGLTMDKEKNLLTVKGTMDVKKLVEILSEKLKRAVEIVPPKKEKDKENGNENGEKKKGGGGDGGGKEKTGNKGGGEGVNMMEYMAAQPAYGYGYYPGGPYGYPIQAHAPQIFSDENPNACVVM.

Basic and acidic residues predominate over residues 1–22; it reads MGEKKNEGDNKKKGGDNKKKNE. The segment at 1–26 is disordered; the sequence is MGEKKNEGDNKKKGGDNKKKNETPSI. HMA domains are found at residues 25–88 and 132–195; these read SITV…KKKV and VTTA…KRAV. Positions 36 and 39 each coordinate Zn(2+). A compositionally biased stretch (basic and acidic residues) spans 82–129; sequence EKTKKKVDLVSPQPKKEKEKENKNKNDEDKKKSEEKKKPDNNDKKPKE. The disordered stretch occupies residues 82–131; that stretch reads EKTKKKVDLVSPQPKKEKEKENKNKNDEDKKKSEEKKKPDNNDKKPKETP. Residues C143 and C146 each contribute to the Zn(2+) site. A compositionally biased stretch (basic and acidic residues) spans 198–230; the sequence is VPPKKEKDKENGNENGEKKKGGGGDGGGKEKTG. The segment at 198-238 is disordered; that stretch reads VPPKKEKDKENGNENGEKKKGGGGDGGGKEKTGNKGGGEGV. C280 is subject to Cysteine methyl ester. The S-farnesyl cysteine moiety is linked to residue C280. Residues 281–283 constitute a propeptide, removed in mature form; sequence VVM.

Belongs to the HIPP family.

The protein resides in the nucleus. It localises to the nucleolus. The protein localises to the cytoplasm. Its function is as follows. Heavy-metal-binding protein. Binds high amounts of zinc. May act as an upstream regulator of the salicylate-dependent pathogen response. Involved in abiotic stress responses, and seed and flower development. The sequence is that of Heavy metal-associated isoprenylated plant protein 3 from Arabidopsis thaliana (Mouse-ear cress).